Here is a 489-residue protein sequence, read N- to C-terminus: Protein SOF1 (489 aa).

WD repeat units follow at residues 65–105, 113–158, 177–214, 217–257, 259–299, 303–342, and 346–385; these read GHRD…EFVS, VTGL…YSNK, DGES…PVSD, WGAD…PTQK, VQTM…RSLN, DHVS…SREI, and KRMQ…RSNV. Basic and acidic residues-rich tracts occupy residues 440-459 and 466-489; these read REAN…ERKK and HKYE…TQEK. The segment at 440-489 is disordered; the sequence is REANERRTRKDMPYISERKKQIVGTVHKYEDSGRDRKRRKEDDKRDTQEK.

This sequence belongs to the WD repeat DCAF13/WDSOF1 family. In terms of assembly, interacts with snoRNA U3. Interacts with NOP1 and MPP10. Component of the ribosomal small subunit (SSU) processome composed of at least 40 protein subunits and snoRNA U3.

It is found in the nucleus. The protein localises to the nucleolus. Required for ribosomal RNA processing. The polypeptide is Protein SOF1 (SOF1) (Saccharomyces cerevisiae (strain ATCC 204508 / S288c) (Baker's yeast)).